Consider the following 580-residue polypeptide: Mucin-1 (580 aa).

The first 22 residues, 1–22 (MTPDIQAPFLSLLLLFPVLTVA), serve as a signal peptide directing secretion. The Extracellular portion of the chain corresponds to 23 to 489 (NVPTLTTSDS…GSGVPGWGIA (467 aa)). The span at 28–37 (TTSDSINPRR) shows a compositional bias: polar residues. A disordered region spans residues 28–359 (TTSDSINPRR…SIALSTSSNP (332 aa)). The segment covering 38 to 88 (TTPVSTTQSSPTSSPTKETSWSTTTTLLTASSPAPSPAASPGHDGASTPTS) has biased composition (low complexity). Repeat copies occupy residues 70-89 (PAPS…PTSS), 90-109 (PAPS…PTSS), 110-129 (PAPS…PTSS), 130-149 (PAPS…PTSS), 150-169 (PAPS…PTGS), 170-189 (PAPS…PTSS), 190-209 (PAPS…PTGS), 210-229 (PAPS…PTSS), 230-249 (PAPS…PTGS), 250-269 (PAPS…LTSS), and 270-289 (PAPS…PTSS). The 11 X 20 AA approximate tandem repeats of P-A-P-S-P-A-A-S-P-G-H-D-G-A-S-T-P-T-S-S stretch occupies residues 70–289 (PAPSPAASPG…QHGASSPTSS (220 aa)). O-linked (GalNAc...) serine glycans are attached at residues S73, S77, and S84. O-linked (GalNAc...) threonine glycans are attached at residues T85 and T87. O-linked (GalNAc...) serine glycans are attached at residues S88 and S89. Composition is skewed to low complexity over residues 96-108 (ASPG…TPTS), 116-128 (ASPG…TPTS), 136-148 (ASPG…TPTS), 156-168 (ASPG…SPTG), 176-188 (ASPG…TPTS), 196-208 (ASPG…SPTG), 216-228 (ASPG…TPTS), 236-248 (ASPG…SPTG), and 256-306 (ASPG…MVTS). N-linked (GlcNAc...) asparagine glycosylation occurs at N161. A glycan (N-linked (GlcNAc...) asparagine) is linked at N201. A glycan (N-linked (GlcNAc...) asparagine) is linked at N241. A compositionally biased stretch (polar residues) spans 308 to 344 (HKGTSSRATMTPVSKGTPSSVPSSETAPTAASHITRT). The span at 345–357 (AASSPSIALSTSS) shows a compositional bias: low complexity. An SEA domain is found at 368–475 (RVSLYFLSFR…VSVYSAPFPS (108 aa)). N384 and N460 each carry an N-linked (GlcNAc...) asparagine glycan. The helical transmembrane segment at 490-510 (LLVLVCVLVALAIIYLIALVV) threads the bilayer. Residues C511 and C513 are each lipidated (S-palmitoyl cysteine). The Cytoplasmic portion of the chain corresponds to 511–580 (CQCGRKKCEQ…TNLAATSANL (70 aa)). The interaction with P53 stretch occupies residues 519–555 (EQLDVFPTLDAYHPMSEYSTYHTHGRYVPPGSTKRSP). Y530 is modified (phosphotyrosine; by PDGFR). Residues 530–533 (YHPM) carry the Interaction with GRB2 motif. Position 539 is a phosphotyrosine (Y539). Residues 544–563 (RYVPPGSTKRSPYEEVSAGN) are disordered. Y545 bears the Phosphotyrosine; by PDGFR mark. The segment at 550-557 (STKRSPYE) is required for interaction with GSK3B. T551 carries the post-translational modification Phosphothreonine; by PKC/PRKCD. S554 is subject to Phosphoserine; by GSK3-beta. Y556 carries the post-translational modification Phosphotyrosine; by CSK, EGFR and SRC. The Interaction with SRC and ESR1 motif lies at 556–559 (YEEV). Residues 560–568 (SAGNGGSNL) are required for interaction with beta- and gamma-catenins. Residue Y570 is modified to Phosphotyrosine. Residues 570 to 572 (YTN) carry the Required for interaction with AP1S2 motif.

The alpha subunit forms a tight, non-covalent heterodimeric complex with the proteolytically-released beta subunit. Binds directly the SH2 domain of GRB2, and forms a MUC1/GRB2/SOS1 complex involved in RAS signaling. The cytoplasmic tail (MUC1CT) interacts with several proteins such as, SRC, CTNNB1 and ERBs. Interaction with the SH2 domain of CSK decreases interaction with GSK3B. Interacts with CTNNB1/beta-catenin and JUP/gamma-catenin and promotes cell adhesion. Interaction with JUP/gamma-catenin is induced by heregulin. Binds PRKCD, ERBB2, ERBB3 and ERBB4. Heregulin (HRG) stimulates the interaction with ERBB2 and, to a much lesser extent, the interaction with ERBB3 and ERBB4. Interacts with P53 in response to DNA damage. Interacts with KLF4. Interacts with estrogen receptor alpha/ESR1, through its DNA-binding domain, and stimulates its transcription activity. Binds ADAM17. Post-translationally, highly glycosylated (N- and O-linked carbohydrates and sialic acid). O-linked glycosylation consists mainly of GalNAc, galactose, and sialic acid. The ratio from pools of milk from different dairy breeds is GalNAc: GlcNAc:galactose:mannose:sialic acid is 14:1:10:1:15. In terms of processing, proteolytic cleavage in the SEA domain occurs in the endoplasmic reticulum by an autoproteolytic mechanism and requires the full-length SEA domain as well as requiring a Ser, Thr or Cys residue at the P + 1 site. Ectodomain shedding is mediated by ADAM17 in uterine epithelial cells. Dual palmitoylation on cysteine residues in the CQC motif is required for recycling from endosomes back to the plasma membrane. Post-translationally, phosphorylated on tyrosines and serine residues in the C-terminal. Phosphorylation on tyrosines in the C-terminal increases the nuclear location of MUC1 and beta-catenin. Phosphorylation by PKC delta induces binding of MUC1 to beta-catenin/CTNNB1 and thus decreases the formation of the beta-catenin/E-cadherin complex. Src-mediated phosphorylation inhibits interaction with GSK3B. Csk- or Src- or EGFR-mediated phosphorylation on Tyr-556 increases binding to beta-catenin/CTNNB1. GSK3B-mediated phosphorylation on Ser-554 decreases this interaction but restores the formation of the beta-cadherin/E-cadherin complex. On T-cell receptor activation, phosphorylated by LCK. PDGFR-mediated phosphorylation increases nuclear colocalization of MUC1CT and CTNNB1. As to expression, expressed on the apical surface of epithelia cells, and on the milk fat globule membrane (MGGM).

The protein resides in the apical cell membrane. It localises to the cell membrane. The protein localises to the cytoplasm. Its subcellular location is the nucleus. In terms of biological role, the alpha subunit has cell adhesive properties. May provide a protective layer on epithelial cells against bacterial and enzyme attack. The beta subunit contains a C-terminal domain which is involved in cell signaling, through phosphorylations and protein-protein interactions. Modulates signaling in ERK, Src and NF-kappa-B pathways. In activated T-cells, influences directly or indirectly the Ras/MAPK pathway. Promotes tumor progression. Regulates P53-mediated transcription and determines cell fate in the genotoxic stress response. Binds, together with KLF4, the PE21 promoter element of P53 and represses P53 activity. The polypeptide is Mucin-1 (MUC1) (Bos taurus (Bovine)).